The chain runs to 427 residues: Sialic acid TRAP transporter large permease protein SiaM (427 aa).

The next 12 helical transmembrane spans lie at 11-31 (LLFA…AFLI), 52-72 (FTLL…SAGI), 82-102 (SLVG…SLLF), 140-160 (ASCI…YGVV), 165-185 (IGAL…ALMV), 214-234 (AFLS…GKFT), 246-266 (ALFL…IEIL), 270-290 (VNTT…GWIV), 301-321 (DYFL…NLLL), 322-342 (LFLG…PFLV), 348-368 (VGID…IGIL), and 394-414 (VLPL…FPQF).

It belongs to the TRAP transporter large permease family. In terms of assembly, the complex comprises the extracytoplasmic solute receptor protein SiaP, and the two transmembrane proteins SiaQ and SiaM. SiaQ and SiaM form a tight 1:1 complex.

It is found in the cell inner membrane. Part of the tripartite ATP-independent periplasmic (TRAP) transport system SiaPQM that catalyzes unidirectional Na(+)-dependent sialic acid uptake. The polypeptide is Sialic acid TRAP transporter large permease protein SiaM (Vibrio cholerae serotype O1 (strain ATCC 39315 / El Tor Inaba N16961)).